Here is a 328-residue protein sequence, read N- to C-terminus: 3-ketodihydrosphingosine reductase TSC10 (328 aa).

NADP(+) is bound at residue L16. The NADPH site is built by G19, S21, and G23. A GXSXG motif is present at residues G19–G23. L24 is an NADP(+) binding site. The NADPH site is built by R44, K48, and D73. Residue D73 coordinates NADP(+). S161 functions as the Proton donor in the catalytic mechanism. 3 residues coordinate NADP(+): Y175, K179, and S210. Y175 acts as the Proton acceptor in catalysis. K179 (lowers pKa of active site Tyr) is an active-site residue. Residues F277–V297 form a helical membrane-spanning segment.

This sequence belongs to the short-chain dehydrogenases/reductases (SDR) family.

It localises to the endoplasmic reticulum membrane. It catalyses the reaction sphinganine + NADP(+) = 3-oxosphinganine + NADPH + H(+). The protein operates within lipid metabolism; sphingolipid metabolism. Catalyzes the reduction of 3'-oxosphinganine (3-ketodihydrosphingosine/KDS) to sphinganine (dihydrosphingosine/DHS), the second step of de novo sphingolipid biosynthesis. This chain is 3-ketodihydrosphingosine reductase TSC10 (TSC10), found in Debaryomyces hansenii (strain ATCC 36239 / CBS 767 / BCRC 21394 / JCM 1990 / NBRC 0083 / IGC 2968) (Yeast).